The following is a 689-amino-acid chain: Polyribonucleotide nucleotidyltransferase (689 aa).

Mg(2+) contacts are provided by Asp482 and Asp488. A KH domain is found at Pro549–Val608. The S1 motif domain maps to Gly618–Lys686.

This sequence belongs to the polyribonucleotide nucleotidyltransferase family. The cofactor is Mg(2+).

It is found in the cytoplasm. The catalysed reaction is RNA(n+1) + phosphate = RNA(n) + a ribonucleoside 5'-diphosphate. In terms of biological role, involved in mRNA degradation. Catalyzes the phosphorolysis of single-stranded polyribonucleotides processively in the 3'- to 5'-direction. This is Polyribonucleotide nucleotidyltransferase from Endomicrobium trichonymphae.